The chain runs to 417 residues: Gamma-glutamyl phosphate reductase (417 aa).

The protein belongs to the gamma-glutamyl phosphate reductase family.

The protein resides in the cytoplasm. It catalyses the reaction L-glutamate 5-semialdehyde + phosphate + NADP(+) = L-glutamyl 5-phosphate + NADPH + H(+). Its pathway is amino-acid biosynthesis; L-proline biosynthesis; L-glutamate 5-semialdehyde from L-glutamate: step 2/2. Functionally, catalyzes the NADPH-dependent reduction of L-glutamate 5-phosphate into L-glutamate 5-semialdehyde and phosphate. The product spontaneously undergoes cyclization to form 1-pyrroline-5-carboxylate. The chain is Gamma-glutamyl phosphate reductase from Aeromonas salmonicida (strain A449).